The chain runs to 161 residues: Large ribosomal subunit protein uL30m (161 aa).

Residues 1–34 constitute a mitochondrion transit peptide; sequence MAGILRLVVQRPPGGLQTVTKGVESLIGTDWIRH.

The protein belongs to the universal ribosomal protein uL30 family. As to quaternary structure, component of the mitochondrial ribosome large subunit (39S) which comprises a 16S rRNA and about 50 distinct proteins.

It is found in the mitochondrion. The sequence is that of Large ribosomal subunit protein uL30m (MRPL30) from Macaca fascicularis (Crab-eating macaque).